The sequence spans 308 residues: GMP synthase [glutamine-hydrolyzing] subunit B (308 aa).

The GMPS ATP-PPase domain maps to 2–183 (LNPSDFIEEA…LGLPREMIQR (182 aa)). 29–35 (SGGVDSS) serves as a coordination point for ATP.

In terms of assembly, heterodimer composed of a glutamine amidotransferase subunit (A) and a GMP-binding subunit (B).

The enzyme catalyses XMP + L-glutamine + ATP + H2O = GMP + L-glutamate + AMP + diphosphate + 2 H(+). It functions in the pathway purine metabolism; GMP biosynthesis; GMP from XMP (L-Gln route): step 1/1. Functionally, catalyzes the synthesis of GMP from XMP. The chain is GMP synthase [glutamine-hydrolyzing] subunit B (guaAB) from Methanothermobacter thermautotrophicus (strain ATCC 29096 / DSM 1053 / JCM 10044 / NBRC 100330 / Delta H) (Methanobacterium thermoautotrophicum).